Reading from the N-terminus, the 689-residue chain is Methionine--tRNA ligase (689 aa).

A 'HIGH' region motif is present at residues 16 to 26; sequence PYANAGLHLGH. Zn(2+)-binding residues include cysteine 147, cysteine 150, cysteine 160, and cysteine 163. The short motif at 342–346 is the 'KMSKS' region element; that stretch reads KMSKS. An ATP-binding site is contributed by lysine 345. The tRNA-binding domain occupies 585–689; the sequence is DFAKVDLRVG…AGVKPGMRVG (105 aa).

It belongs to the class-I aminoacyl-tRNA synthetase family. MetG type 1 subfamily. In terms of assembly, homodimer. The cofactor is Zn(2+).

Its subcellular location is the cytoplasm. The catalysed reaction is tRNA(Met) + L-methionine + ATP = L-methionyl-tRNA(Met) + AMP + diphosphate. In terms of biological role, is required not only for elongation of protein synthesis but also for the initiation of all mRNA translation through initiator tRNA(fMet) aminoacylation. The chain is Methionine--tRNA ligase from Chromobacterium violaceum (strain ATCC 12472 / DSM 30191 / JCM 1249 / CCUG 213 / NBRC 12614 / NCIMB 9131 / NCTC 9757 / MK).